A 256-amino-acid polypeptide reads, in one-letter code: Chloroplastic group IIB intron splicing facilitator CRS2, chloroplastic (256 aa).

A chloroplast-targeting transit peptide spans 1 to 45 (MSLLAAAIPSTSSHFSAPFLPSFRMPRKSLTAPLHRIRRPRPFTV). TRNA is bound at residue Tyr-74. The active-site Proton acceptor is His-79. TRNA is bound by residues Tyr-124, Asn-126, and Asn-172.

It belongs to the PTH family. CRS2 subfamily. Interacts with CAF1 and CAF2. Part of large ribonucleo-protein complexes that include group IIB introns and either CAF1 or CAF2.

Its subcellular location is the plastid. The protein localises to the chloroplast stroma. In terms of biological role, required for the splicing of group IIB introns in chloroplasts. Forms complexes with either CAF1 or CAF2 which, in turn, interact with RNA and confer intron specificity of the splicing particles. Has no peptidyl-tRNA hydrolase activity. The sequence is that of Chloroplastic group IIB intron splicing facilitator CRS2, chloroplastic (CRS2) from Zea mays (Maize).